An 83-amino-acid chain; its full sequence is U5-theraphotoxin-Hs1a 5 (83 aa).

The N-terminal stretch at 1–21 (MKTSMFLTLTGLVLLFVVCYA) is a signal peptide. Positions 22 to 49 (SESEEKEFPKELPSSIFAADSDFKVEER) are excised as a propeptide. Disulfide bonds link cysteine 51/cysteine 63, cysteine 56/cysteine 68, and cysteine 62/cysteine 75.

Belongs to the neurotoxin 10 (Hwtx-1) family. 51 (Hntx-8) subfamily. Hntx-8 sub-subfamily. As to expression, expressed by the venom gland.

The protein resides in the secreted. Its function is as follows. Agglutinates erythrocytes. The sequence is that of U5-theraphotoxin-Hs1a 5 from Cyriopagopus schmidti (Chinese bird spider).